The chain runs to 454 residues: GTPase Der (454 aa).

EngA-type G domains lie at 4–167 (AIVA…SEDK) and 188–363 (LELA…ASWQ). GTP is bound by residues 10 to 17 (GKPNVGKS), 56 to 60 (DTPGL), 121 to 124 (NKTE), 194 to 201 (GRPNCGKS), 241 to 245 (DTAGV), and 306 to 309 (NKWD). The KH-like domain maps to 364-450 (KRVTTGTLNQ…PVRLSFVKGK (87 aa)).

It belongs to the TRAFAC class TrmE-Era-EngA-EngB-Septin-like GTPase superfamily. EngA (Der) GTPase family. As to quaternary structure, associates with the 50S ribosomal subunit.

Functionally, GTPase that plays an essential role in the late steps of ribosome biogenesis. The sequence is that of GTPase Der from Orientia tsutsugamushi (strain Ikeda) (Rickettsia tsutsugamushi).